The sequence spans 545 residues: Sphingosine-1-phosphate lyase (545 aa).

The Lumenal segment spans residues 1 to 26 (MRPFSGSDCLKPVTEGINRAFGAKEP). The helical; Signal-anchor for type III membrane protein transmembrane segment at 27-47 (WQVATITATTVLGGVWLWTVI) threads the bilayer. Residues 48-545 (CQDENLYIRG…HSMYYTPSQK (498 aa)) are Cytoplasmic-facing. Residue Lys-342 is modified to N6-(pyridoxal phosphate)lysine.

This sequence belongs to the group II decarboxylase family. Sphingosine-1-phosphate lyase subfamily. The cofactor is pyridoxal 5'-phosphate. Localized to the developing gut primordium during embryogenesis.

Its subcellular location is the endoplasmic reticulum membrane. It carries out the reaction sphinganine 1-phosphate = hexadecanal + phosphoethanolamine. It functions in the pathway lipid metabolism; sphingolipid metabolism. Functionally, cleaves phosphorylated sphingoid bases (PSBs), such as sphingosine-1-phosphate, into fatty aldehydes and phosphoethanolamine. Sphingolipid catabolism is required for normal development including viability, reproduction and muscle development. This Drosophila melanogaster (Fruit fly) protein is Sphingosine-1-phosphate lyase.